We begin with the raw amino-acid sequence, 457 residues long: Multidrug resistance protein MdtK (457 aa).

12 helical membrane-spanning segments follow: residues 11–31 (LLAL…MGFV), 53–73 (IWLP…PVIA), 93–113 (WLAS…GYII), 127–147 (AVGY…FQVA), 160–180 (GMVM…IFIY), 188–208 (LGGI…FIAM), 243–263 (LPIA…ALLV), 276–296 (IALN…AAVT), 314–334 (AART…IFTV), 357–377 (LMLL…GSGI), 387–407 (IFFI…YILA), and 418–438 (PAGF…LMML).

Belongs to the multi antimicrobial extrusion (MATE) (TC 2.A.66.1) family. MdtK subfamily.

Its subcellular location is the cell inner membrane. In terms of biological role, multidrug efflux pump that functions probably as a Na(+)/drug antiporter. In Salmonella arizonae (strain ATCC BAA-731 / CDC346-86 / RSK2980), this protein is Multidrug resistance protein MdtK.